We begin with the raw amino-acid sequence, 199 residues long: COMM domain-containing protein 4 (199 aa).

The region spanning 130 to 199 (RLASVGWRVD…QAQTMMTALG (70 aa)) is the COMM domain.

This sequence belongs to the COMM domain-containing protein 4 family. As to quaternary structure, component of the commander complex consisting of the CCC subcomplex and the retriever subcomplex. Component of the CCC (COMMD/CCDC22/CCDC93) subcomplex consisting of COMMD1, COMMD2, COMMD3, COMMD4, COMMD5, COMMD6, COMMD7, COMMD8, COMMD9, COMMD10, CCDC22 and CCDC93; within the complex forms a heterodimer with COMMD8. Interacts with RELA, RELB, NFKB1/p105. Interacts with CCDC22, CCDC93, SCNN1B, CUL2, CUL3, CUL4A, CUL5, CUL7.

The protein resides in the cytoplasm. It is found in the nucleus. Scaffold protein in the commander complex that is essential for endosomal recycling of transmembrane cargos; the commander complex is composed of the CCC subcomplex and the retriever subcomplex. May modulate activity of cullin-RING E3 ubiquitin ligase (CRL) complexes. Down-regulates activation of NF-kappa-B. The protein is COMM domain-containing protein 4 (Commd4) of Mus musculus (Mouse).